The primary structure comprises 132 residues: Small ribosomal subunit protein uS8 (132 aa).

The protein belongs to the universal ribosomal protein uS8 family. Part of the 30S ribosomal subunit. Contacts proteins S5 and S12.

Its function is as follows. One of the primary rRNA binding proteins, it binds directly to 16S rRNA central domain where it helps coordinate assembly of the platform of the 30S subunit. This Bartonella quintana (strain Toulouse) (Rochalimaea quintana) protein is Small ribosomal subunit protein uS8.